An 801-amino-acid chain; its full sequence is Na(+)/H(+) antiporter subunit A (801 aa).

Transmembrane regions (helical) follow at residues 4–21 (LHLA…IPFL), 28–50 (VHTG…PMIR), 80–102 (GLLF…IFYL), 109–128 (LGPF…GVVL), 132–154 (VMVL…GYWY), 166–188 (SLLI…YLIT), 203–222 (IAGH…GAFT), 229–251 (FYIW…HSAT), 266–288 (IFAF…MVWG), 301–323 (ILAF…SAAA), 338–360 (AAIF…VGII), 372–394 (LGGL…FSMA), 428–450 (VLFP…KLLF), 471–493 (VGML…FPNI), 526–548 (GVTT…YLSL), 594–616 (YLLY…KGGF), 626–647 (IGVY…TVFA), 654–671 (IIAL…FVIF), 676–698 (LALT…FYHL), 710–732 (FRMT…GIAS), and 772–789 (MFEI…YSMI).

Belongs to the CPA3 antiporters (TC 2.A.63) subunit A family. In terms of assembly, forms a heterooligomeric complex that consists of seven subunits: MrpA, MrpB, MrpC, MrpD, MrpE, MrpF and MrpG.

The protein resides in the cell membrane. Mrp complex is a Na(+)/H(+) antiporter that is considered to be the major Na(+) excretion system in B.subtilis. Has a major role in Na(+) resistance and a minor role in Na(+)- and K(+)-dependent pH homeostasis as compared to TetB. MrpA may be the actual Na(+)/H(+) antiporter, although the six other Mrp proteins are all required for Na(+)/H(+) antiport activity and Na(+) resistance. MrpA is required for initiation of sporulation when external Na(+) concentration increases. Also transports Li(+) but not K(+), Ca(2+) or Mg(2+). The protein is Na(+)/H(+) antiporter subunit A (mrpA) of Bacillus subtilis (strain 168).